The following is a 502-amino-acid chain: 4,4'-diaponeurosporene oxygenase (502 aa).

8 to 20 (IIGGGLGGISAAI) lines the FAD pocket.

This sequence belongs to the carotenoid/retinoid oxidoreductase family. CrtP subfamily. Requires FAD as cofactor.

The enzyme catalyses all-trans-4,4'-diaponeurosporene + 2 AH2 + 2 O2 = 4,4'-diaponeurosporenal + 2 A + 3 H2O. It functions in the pathway carotenoid biosynthesis; staphyloxanthin biosynthesis; staphyloxanthin from farnesyl diphosphate: step 3/5. In terms of biological role, involved in the biosynthesis of the yellow-orange carotenoid staphyloxanthin, which plays a role in the virulence via its protective function against oxidative stress. Catalyzes the oxidation of the terminal methyl side group of 4,4'-diaponeurosporene to form 4,4'-diaponeurosporen-4-al. This chain is 4,4'-diaponeurosporene oxygenase, found in Staphylococcus haemolyticus (strain JCSC1435).